Here is a 497-residue protein sequence, read N- to C-terminus: 3-ketoacyl-CoA synthase 6 (497 aa).

Transmembrane regions (helical) follow at residues 25–45 (LVNH…AVEL) and 64–84 (LVQV…YFMS). One can recognise an FAE domain in the interval 81 to 370 (YFMSKPRTIY…FLTSLIGRKI (290 aa)). Residues Cys225, His304, His388, His392, His421, and Asn425 contribute to the active site.

This sequence belongs to the thiolase-like superfamily. Chalcone/stilbene synthases family. In terms of tissue distribution, in epidermal cells of aerial tissues and in the tapetum of anthers near maturity. Expressed in siliques, flowers and leaves.

The protein localises to the endoplasmic reticulum membrane. It carries out the reaction a very-long-chain acyl-CoA + malonyl-CoA + H(+) = a very-long-chain 3-oxoacyl-CoA + CO2 + CoA. It participates in lipid metabolism; fatty acid biosynthesis. Its activity is regulated as follows. Strongly inhibited by metazachlor and mefluidide. Functionally, contributes to cuticular wax and suberin biosynthesis. Involved in both decarbonylation and acyl-reduction wax synthesis pathways. Required for elongation of C24 fatty acids, an essential step of the cuticular wax production. Major condensing enzyme for stem wax and pollen coat lipid biosynthesis. This Arabidopsis thaliana (Mouse-ear cress) protein is 3-ketoacyl-CoA synthase 6.